The following is an 81-amino-acid chain: uncharacterized protein (81 aa).

This is an uncharacterized protein from Archaeoglobus fulgidus (strain ATCC 49558 / DSM 4304 / JCM 9628 / NBRC 100126 / VC-16).